Here is a 174-residue protein sequence, read N- to C-terminus: Ribosome maturation factor RimM (174 aa).

Residues 97 to 169 (PDTYYDHQLE…ILEIDPPDGL (73 aa)) form the PRC barrel domain.

This sequence belongs to the RimM family. Binds ribosomal protein uS19.

The protein resides in the cytoplasm. Its function is as follows. An accessory protein needed during the final step in the assembly of 30S ribosomal subunit, possibly for assembly of the head region. Essential for efficient processing of 16S rRNA. May be needed both before and after RbfA during the maturation of 16S rRNA. It has affinity for free ribosomal 30S subunits but not for 70S ribosomes. The chain is Ribosome maturation factor RimM from Mycobacterium ulcerans (strain Agy99).